Consider the following 591-residue polypeptide: Putative F-box protein At1g32140 (591 aa).

The F-box domain maps to 2–49 (TMMSDLSLDLVEEILCRVPITSLKAVRSSCKLWNVLSKNRILCKTEAR). Positions 567–581 (AGRKRKEKKTKRKSK) are enriched in basic residues. A disordered region spans residues 567-591 (AGRKRKEKKTKRKSKDKQMKLSNKV).

The polypeptide is Putative F-box protein At1g32140 (Arabidopsis thaliana (Mouse-ear cress)).